The sequence spans 290 residues: NAD kinase (290 aa).

The active-site Proton acceptor is the D73. Residues 73-74 (DG), 147-148 (ND), R158, R175, D177, 188-193 (TAYALS), and Q246 each bind NAD(+).

Belongs to the NAD kinase family. A divalent metal cation is required as a cofactor.

It localises to the cytoplasm. The catalysed reaction is NAD(+) + ATP = ADP + NADP(+) + H(+). In terms of biological role, involved in the regulation of the intracellular balance of NAD and NADP, and is a key enzyme in the biosynthesis of NADP. Catalyzes specifically the phosphorylation on 2'-hydroxyl of the adenosine moiety of NAD to yield NADP. The protein is NAD kinase of Thiobacillus denitrificans (strain ATCC 25259 / T1).